Reading from the N-terminus, the 125-residue chain is Small ribosomal subunit protein uS12 (125 aa).

The tract at residues 1–31 (MPTINQLVRQGREVETTKSKSPAMQNSPQRR) is disordered. A compositionally biased stretch (polar residues) spans 19-29 (SKSPAMQNSPQ). Residue aspartate 89 is modified to 3-methylthioaspartic acid.

The protein belongs to the universal ribosomal protein uS12 family. Part of the 30S ribosomal subunit. Contacts proteins S8 and S17. May interact with IF1 in the 30S initiation complex.

In terms of biological role, with S4 and S5 plays an important role in translational accuracy. Interacts with and stabilizes bases of the 16S rRNA that are involved in tRNA selection in the A site and with the mRNA backbone. Located at the interface of the 30S and 50S subunits, it traverses the body of the 30S subunit contacting proteins on the other side and probably holding the rRNA structure together. The combined cluster of proteins S8, S12 and S17 appears to hold together the shoulder and platform of the 30S subunit. This is Small ribosomal subunit protein uS12 from Paracidovorax citrulli (strain AAC00-1) (Acidovorax citrulli).